A 334-amino-acid polypeptide reads, in one-letter code: Methylthioribose-1-phosphate isomerase (334 aa).

Substrate contacts are provided by residues 44-46, R87, and Q192; that span reads RGA. Residue D233 is the Proton donor of the active site. 243-244 provides a ligand contact to substrate; that stretch reads NK.

The protein belongs to the eIF-2B alpha/beta/delta subunits family. MtnA subfamily.

The catalysed reaction is 5-(methylsulfanyl)-alpha-D-ribose 1-phosphate = 5-(methylsulfanyl)-D-ribulose 1-phosphate. The protein operates within amino-acid biosynthesis; L-methionine biosynthesis via salvage pathway; L-methionine from S-methyl-5-thio-alpha-D-ribose 1-phosphate: step 1/6. Functionally, catalyzes the interconversion of methylthioribose-1-phosphate (MTR-1-P) into methylthioribulose-1-phosphate (MTRu-1-P). In Dehalococcoides mccartyi (strain ATCC BAA-2266 / KCTC 15142 / 195) (Dehalococcoides ethenogenes (strain 195)), this protein is Methylthioribose-1-phosphate isomerase.